We begin with the raw amino-acid sequence, 255 residues long: uncharacterized protein (255 aa).

This is an uncharacterized protein from Pseudomonas chlororaphis (Pseudomonas aureofaciens).